We begin with the raw amino-acid sequence, 122 residues long: MIQVESNLDVADNSGAKRVCCIKVLGGSRRRYATVGDIIVVSVKDALPNSKVKKGAVMKAVVVRTKKEVGRADGSYIKFDSNSAVLLSNQGEPVGTRIFGPVARELRQKNFMKIVSLAPEVL.

The protein belongs to the universal ribosomal protein uL14 family. Part of the 50S ribosomal subunit. Forms a cluster with proteins L3 and L19. In the 70S ribosome, L14 and L19 interact and together make contacts with the 16S rRNA in bridges B5 and B8.

Functionally, binds to 23S rRNA. Forms part of two intersubunit bridges in the 70S ribosome. The protein is Large ribosomal subunit protein uL14 of Solidesulfovibrio magneticus (strain ATCC 700980 / DSM 13731 / RS-1) (Desulfovibrio magneticus).